The following is a 492-amino-acid chain: Malonyl-CoA decarboxylase, mitochondrial (492 aa).

The N-terminal 38 residues, 1 to 38 (MRGLGPSLRARRLLPLRYPPRPPGPRGPRLCSGLTASA), are a transit peptide targeting the mitochondrion. The alpha-helical domain stretch occupies residues 39 to 189 (MDELLRRAVP…VLKSMLSEWF (151 aa)). Lys-58 carries the N6-acetyllysine modification. Lys-167 is subject to N6-acetyllysine; alternate. The residue at position 167 (Lys-167) is an N6-succinyllysine; alternate. A catalytic domain region spans residues 190 to 492 (SSGFLNLERV…VAQFQSNSKL (303 aa)). The residue at position 210 (Lys-210) is an N6-acetyllysine. Residue Lys-221 is modified to N6-succinyllysine. 298–304 (QGVELGT) is a binding site for malonyl-CoA. An N6-acetyllysine modification is found at Lys-316. Ser-328 contributes to the malonyl-CoA binding site. Ser-328 (proton acceptor) is an active-site residue. Lys-385 carries the post-translational modification N6-acetyllysine; alternate. Lys-385 is modified (N6-succinyllysine; alternate). Lys-388 bears the N6-acetyllysine mark. A malonyl-CoA-binding site is contributed by His-422. The Proton donor role is filled by His-422. N6-acetyllysine occurs at positions 441 and 471. The short motif at 490-492 (SKL) is the Microbody targeting signal element.

Homotetramer. Dimer of dimers. The two subunits within a dimer display conformational differences suggesting that at any given moment, only one of the two subunits is competent for malonyl-CoA binding and catalytic activity. Under oxidizing conditions, can form disulfide-linked homotetramers (in vitro). Associates with the peroxisomal targeting signal receptor PEX5. In terms of processing, acetylation at Lys-471 activates malonyl-CoA decarboxylase activity. Deacetylation at Lys-471 by SIRT4 represses activity, leading to promote lipogenesis. Post-translationally, interchain disulfide bonds may form in peroxisomes (Potential). Interchain disulfide bonds are not expected to form in the reducing environment of the cytoplasm and mitochondria. In terms of tissue distribution, expressed in liver, heart, skeletal muscles and adipose tissues (at protein level). Ubiquitous. Strongly expressed in liver, kidney, heart, skeletal muscle and adipose tissues. Weakly expressed in brain.

The protein resides in the cytoplasm. It is found in the mitochondrion matrix. The protein localises to the peroxisome. It localises to the peroxisome matrix. It catalyses the reaction malonyl-CoA + H(+) = acetyl-CoA + CO2. It functions in the pathway metabolic intermediate biosynthesis; acetyl-CoA biosynthesis; acetyl-CoA from malonyl-CoA: step 1/1. With respect to regulation, malonyl-CoA decarboxylase activity does not require any cofactors or divalent metal ions. Catalyzes the conversion of malonyl-CoA to acetyl-CoA. In the fatty acid biosynthesis MCD selectively removes malonyl-CoA and thus assures that methyl-malonyl-CoA is the only chain elongating substrate for fatty acid synthase and that fatty acids with multiple methyl side chains are produced. In peroxisomes it may be involved in degrading intraperoxisomal malonyl-CoA, which is generated by the peroxisomal beta-oxidation of odd chain-length dicarboxylic fatty acids. Plays a role in the metabolic balance between glucose and lipid oxidation in muscle independent of alterations in insulin signaling. May play a role in controlling the extent of ischemic injury by promoting glucose oxidation. This chain is Malonyl-CoA decarboxylase, mitochondrial, found in Rattus norvegicus (Rat).